Consider the following 156-residue polypeptide: Putative pre-16S rRNA nuclease (156 aa).

The protein belongs to the YqgF nuclease family.

It localises to the cytoplasm. In terms of biological role, could be a nuclease involved in processing of the 5'-end of pre-16S rRNA. The protein is Putative pre-16S rRNA nuclease of Nocardioides sp. (strain ATCC BAA-499 / JS614).